The sequence spans 121 residues: Apoptin (121 aa).

Disordered regions lie at residues 1–28 (MNAL…LETP) and 57–121 (LRSA…RIRL). The segment covering 58 to 70 (RSATADNSESTGF) has biased composition (polar residues). Residues 88-102 (RSCDPSEYRVSELKE) are compositionally biased toward basic and acidic residues.

It belongs to the gyrovirus apoptin family.

It localises to the host nucleus. In terms of biological role, may act as transcriptional regulator. Induces apoptosis in infected cells. Element of infectious replication cycle. The protein is Apoptin (VP3) of Gallus gallus (Chicken).